The sequence spans 118 residues: Dihydroneopterin aldolase (118 aa).

Substrate contacts are provided by residues Glu21, Tyr53, and 72 to 73; that span reads IE. Lys98 functions as the Proton donor/acceptor in the catalytic mechanism.

This sequence belongs to the DHNA family.

The enzyme catalyses 7,8-dihydroneopterin = 6-hydroxymethyl-7,8-dihydropterin + glycolaldehyde. It carries out the reaction 7,8-dihydroneopterin = 7,8-dihydromonapterin. The protein operates within cofactor biosynthesis; tetrahydrofolate biosynthesis; 2-amino-4-hydroxy-6-hydroxymethyl-7,8-dihydropteridine diphosphate from 7,8-dihydroneopterin triphosphate: step 3/4. Catalyzes the conversion of 7,8-dihydroneopterin to 6-hydroxymethyl-7,8-dihydropterin. Can use L-threo-dihydroneopterin and D-erythro-dihydroneopterin as substrates for the formation of 6-hydroxymethyldihydropterin, but it can also catalyze the epimerization of carbon 2' of dihydroneopterin to dihydromonapterin. The polypeptide is Dihydroneopterin aldolase (folB) (Haemophilus influenzae (strain ATCC 51907 / DSM 11121 / KW20 / Rd)).